The primary structure comprises 443 residues: Xaa-Pro dipeptidase (443 aa).

5 residues coordinate Mn(2+): D246, D257, H339, E384, and E423.

Belongs to the peptidase M24B family. Bacterial-type prolidase subfamily. It depends on Mn(2+) as a cofactor.

It carries out the reaction Xaa-L-Pro dipeptide + H2O = an L-alpha-amino acid + L-proline. Splits dipeptides with a prolyl residue in the C-terminal position. This Yersinia pseudotuberculosis serotype I (strain IP32953) protein is Xaa-Pro dipeptidase.